The primary structure comprises 489 residues: MDQKFDEFIAQTESEAEIDTSSRYTTGSISPQFASPTKFKNVLPHETDTQTGQRNRVAEHQHVPKSLLNASVEESHNHPLKEDKSESRQRQVSVSNSNPSSKGMVNKRRSLIQPMMVPTTPETDRTRPQSQSNVASGNSANKNNLHPDTNHGIDINATTQTPSSMSMGNPKFSENFASLAPSSKRNSMHSRTSSSQSMAIDSSLGGSMDVNALLQSLANKELELLECKRKIDDLKKQLHMEENIYQNKANELQELKNKVSKNINVSGSNQPVFNKTSTTGRKNSRESSRRNTHVTPVKTTRNDIRQDTSLNQDMENTDDNKQSMWSKPLALFNQVDQIIQQELERTLNWDEPPTPVEETEENQEGDKSVSKSLWSFVSDLKTGLLGIEEEEDGHHTQQSNSNVNRPKNTHGQVMDNRKHANEDINLSIKEFKTTKKHLDDNSDTHLKQRSGRTAVRKTKSGNKLNFVDDSDDGDSTLEADMVEMGSFSR.

5 disordered regions span residues Met-1–Ala-199, Ile-263–Lys-321, Glu-344–Ser-370, Glu-391–Val-413, and Asp-439–Leu-477. Residues Asp-19–Ser-35 are compositionally biased toward polar residues. Basic and acidic residues predominate over residues Glu-73–Gln-89. 3 stretches are compositionally biased toward polar residues: residues Arg-90–Gly-103, Pro-128–Pro-147, and Asn-156–Met-167. A compositionally biased stretch (low complexity) spans Ser-182–Ser-197. A coiled-coil region spans residues Val-210 to Ser-266. The span at Ile-263–Arg-281 shows a compositional bias: polar residues. The segment covering Thr-396–Gly-411 has biased composition (polar residues). A compositionally biased stretch (basic residues) spans Lys-447–Ser-460. The segment covering Asp-468–Leu-477 has biased composition (acidic residues).

The protein belongs to the TDA11 family.

Its subcellular location is the cytoplasm. The sequence is that of Topoisomerase I damage affected protein 11 (TDA11) from Candida glabrata (strain ATCC 2001 / BCRC 20586 / JCM 3761 / NBRC 0622 / NRRL Y-65 / CBS 138) (Yeast).